Consider the following 155-residue polypeptide: Protein E6 (155 aa).

2 zinc fingers span residues 31–67 and 104–140; these read CIFCKKWLLTTEVLSFAFRDLRVVWRDGYPFAACLAC and CCKCHKPLSPVEKVQHIVQKAQFFKIHSVWKGYCLHC.

Belongs to the papillomaviridae E6 protein family. In terms of assembly, forms homodimers. Interacts with ubiquitin-protein ligase UBE3A/E6-AP; this interaction stimulates UBE3A ubiquitin activity. Interacts with host TP53 and EP300; this interaction inhibits TP53 activity.

It localises to the host cytoplasm. It is found in the host nucleus. Its function is as follows. This protein may be involved in the oncogenic potential of this virus (cervical neoplasia-associated virus). In terms of biological role, plays a major role in the induction and maintenance of cellular transformation. E6 associates with host UBE3A/E6-AP ubiquitin-protein ligase and modulates its activity. Sequesters tumor suppressor TP53 in the host cytoplasm and modulates its activity by interacting with host EP300 that results in the reduction of TP53 acetylation and activation. In turn, apoptosis induced by DNA damage is inhibited. E6 also protects host keratinocytes from apoptosis by mediating the degradation of host BAK1. May also inhibit host immune response. The chain is Protein E6 from Human papillomavirus 43.